Here is a 305-residue protein sequence, read N- to C-terminus: Tyrosine recombinase XerC (305 aa).

The region spanning 1–93 (MVLDGFAAHF…SWRQYCVWLV (93 aa)) is the Core-binding (CB) domain. Positions 114-294 (RVPKALPQEW…DFDHIARLYD (181 aa)) constitute a Tyr recombinase domain. Catalysis depends on residues R155, K179, H246, R249, and H272. Catalysis depends on Y281, which acts as the O-(3'-phospho-DNA)-tyrosine intermediate.

It belongs to the 'phage' integrase family. XerC subfamily. As to quaternary structure, forms a cyclic heterotetrameric complex composed of two molecules of XerC and two molecules of XerD.

The protein localises to the cytoplasm. Its function is as follows. Site-specific tyrosine recombinase, which acts by catalyzing the cutting and rejoining of the recombining DNA molecules. The XerC-XerD complex is essential to convert dimers of the bacterial chromosome into monomers to permit their segregation at cell division. It also contributes to the segregational stability of plasmids. The protein is Tyrosine recombinase XerC of Neisseria meningitidis serogroup C / serotype 2a (strain ATCC 700532 / DSM 15464 / FAM18).